The sequence spans 40 residues: Photosystem II reaction center protein J (40 aa).

The chain crosses the membrane as a helical span at residues 8–28 (IPLWIVGTVTGILVIGLIGVF).

Belongs to the PsbJ family. In terms of assembly, PSII is composed of 1 copy each of membrane proteins PsbA, PsbB, PsbC, PsbD, PsbE, PsbF, PsbH, PsbI, PsbJ, PsbK, PsbL, PsbM, PsbT, PsbX, PsbY, PsbZ, Psb30/Ycf12, at least 3 peripheral proteins of the oxygen-evolving complex and a large number of cofactors. It forms dimeric complexes.

It localises to the plastid. It is found in the chloroplast thylakoid membrane. Functionally, one of the components of the core complex of photosystem II (PSII). PSII is a light-driven water:plastoquinone oxidoreductase that uses light energy to abstract electrons from H(2)O, generating O(2) and a proton gradient subsequently used for ATP formation. It consists of a core antenna complex that captures photons, and an electron transfer chain that converts photonic excitation into a charge separation. The polypeptide is Photosystem II reaction center protein J (Coffea arabica (Arabian coffee)).